Here is a 66-residue protein sequence, read N- to C-terminus: Muscarinic toxin alpha (66 aa).

Disulfide bonds link cysteine 3–cysteine 24, cysteine 17–cysteine 42, cysteine 46–cysteine 58, and cysteine 59–cysteine 64.

It belongs to the three-finger toxin family. Short-chain subfamily. Aminergic toxin sub-subfamily. In terms of tissue distribution, expressed by the venom gland.

The protein resides in the secreted. Selectively binds with high-affinity to the a2B-adrenoceptor subtype (ADRA2B). The toxin reversibly binds to ADRA2B, and its mode of inhibition is non-competitive. The toxin has also been described to bind with high affinity to all muscarinic receptor subtypes (Ki=23 nM (on CHRM1), Ki=44 nM (on CHRM2), Ki=3 nM (on CHRM3), Ki=5 nM (on CHRM4), and Ki=8 nM (on CHRM5)) but no other data support these affinity values. The polypeptide is Muscarinic toxin alpha (Dendroaspis polylepis polylepis (Black mamba)).